Consider the following 298-residue polypeptide: Acetylglutamate kinase (298 aa).

Substrate is bound by residues Gly69–Gly70, Arg91, and Asn196.

It belongs to the acetylglutamate kinase family. ArgB subfamily.

It is found in the cytoplasm. It catalyses the reaction N-acetyl-L-glutamate + ATP = N-acetyl-L-glutamyl 5-phosphate + ADP. It participates in amino-acid biosynthesis; L-arginine biosynthesis; N(2)-acetyl-L-ornithine from L-glutamate: step 2/4. Its function is as follows. Catalyzes the ATP-dependent phosphorylation of N-acetyl-L-glutamate. The polypeptide is Acetylglutamate kinase (Rhodopseudomonas palustris (strain TIE-1)).